A 141-amino-acid chain; its full sequence is Nucleoside diphosphate kinase (141 aa).

ATP-binding residues include K9, F57, R85, T91, R102, and N112. The Pros-phosphohistidine intermediate role is filled by H115.

The protein belongs to the NDK family. Homotetramer. It depends on Mg(2+) as a cofactor.

It localises to the cytoplasm. The catalysed reaction is a 2'-deoxyribonucleoside 5'-diphosphate + ATP = a 2'-deoxyribonucleoside 5'-triphosphate + ADP. It catalyses the reaction a ribonucleoside 5'-diphosphate + ATP = a ribonucleoside 5'-triphosphate + ADP. Functionally, major role in the synthesis of nucleoside triphosphates other than ATP. The ATP gamma phosphate is transferred to the NDP beta phosphate via a ping-pong mechanism, using a phosphorylated active-site intermediate. The chain is Nucleoside diphosphate kinase from Chlamydia muridarum (strain MoPn / Nigg).